We begin with the raw amino-acid sequence, 106 residues long: MYAIVESGGKQFRVEPGKVFFTERVVGKGEGEEVKLDKVLMVKTDDGKVLVGKPYLENVEIKGTIVEHGRARKVIVGKFRPRKNYRRIKGHRQWYTAIKVEEIQVK.

The protein belongs to the bacterial ribosomal protein bL21 family. As to quaternary structure, part of the 50S ribosomal subunit. Contacts protein L20.

This protein binds to 23S rRNA in the presence of protein L20. In Thermosipho africanus (strain TCF52B), this protein is Large ribosomal subunit protein bL21.